The primary structure comprises 515 residues: 2-isopropylmalate synthase (515 aa).

The region spanning I4–K266 is the Pyruvate carboxyltransferase domain. Residues D13, H201, H203, and N237 each contribute to the Mn(2+) site. Positions Q391–P515 are regulatory domain.

This sequence belongs to the alpha-IPM synthase/homocitrate synthase family. LeuA type 1 subfamily. Homodimer. Mn(2+) serves as cofactor.

The protein resides in the cytoplasm. The catalysed reaction is 3-methyl-2-oxobutanoate + acetyl-CoA + H2O = (2S)-2-isopropylmalate + CoA + H(+). The protein operates within amino-acid biosynthesis; L-leucine biosynthesis; L-leucine from 3-methyl-2-oxobutanoate: step 1/4. Functionally, catalyzes the condensation of the acetyl group of acetyl-CoA with 3-methyl-2-oxobutanoate (2-ketoisovalerate) to form 3-carboxy-3-hydroxy-4-methylpentanoate (2-isopropylmalate). This Geobacillus thermodenitrificans (strain NG80-2) protein is 2-isopropylmalate synthase.